We begin with the raw amino-acid sequence, 852 residues long: Bifunctional uridylyltransferase/uridylyl-removing enzyme (852 aa).

Residues 1 to 318 (MPENLSSALE…STPMRVTLRI (318 aa)) form a uridylyltransferase region. Residues 319-672 (DDDYIQVNNQ…SRILPQSDSF (354 aa)) are uridylyl-removing. An HD domain is found at 436-558 (VDDHILAVVR…VQTHERLSAL (123 aa)). ACT domains lie at 673 to 757 (QVMV…SCNR) and 785 to 852 (SVEI…EQLA).

This sequence belongs to the GlnD family. Mg(2+) serves as cofactor.

It carries out the reaction [protein-PII]-L-tyrosine + UTP = [protein-PII]-uridylyl-L-tyrosine + diphosphate. It catalyses the reaction [protein-PII]-uridylyl-L-tyrosine + H2O = [protein-PII]-L-tyrosine + UMP + H(+). With respect to regulation, uridylyltransferase (UTase) activity is inhibited by glutamine, while glutamine activates uridylyl-removing (UR) activity. In terms of biological role, modifies, by uridylylation and deuridylylation, the PII regulatory proteins (GlnB and homologs), in response to the nitrogen status of the cell that GlnD senses through the glutamine level. Under low glutamine levels, catalyzes the conversion of the PII proteins and UTP to PII-UMP and PPi, while under higher glutamine levels, GlnD hydrolyzes PII-UMP to PII and UMP (deuridylylation). Thus, controls uridylylation state and activity of the PII proteins, and plays an important role in the regulation of nitrogen assimilation and metabolism. This Neisseria gonorrhoeae (strain NCCP11945) protein is Bifunctional uridylyltransferase/uridylyl-removing enzyme.